The primary structure comprises 327 residues: Ribose operon repressor (327 aa).

Positions 1 to 56 constitute an HTH lacI-type domain; sequence MTTIKQVALEAGVSKSTVSRFIAQNGYVSDEAREKIERAIKKLNFRPNLSAQSLKT. The segment at residues 4 to 23 is a DNA-binding region (H-T-H motif); it reads IKQVALEAGVSKSTVSRFIA.

Transcriptional repressor for the ribose rbsDACBK operon. In Lactococcus lactis subsp. lactis (strain IL1403) (Streptococcus lactis), this protein is Ribose operon repressor (rbsR).